The primary structure comprises 385 residues: MIKEKRLRIAMVAGELSGDLLGAGVIRELKQHLTNVEFMGVGGPQMLKEGFHSLIDISELSVMGISDVLRRYPQLYLIRERLLREWTINPPDVFIGIDYPDFNLSVEARLKKQHIKTIHLVSPKVWAWRQKRVHLIKKAVDLVLTLFPFEEAFYLQHGVSAQFIGHPLADLIEINPSCSALRKKYNYHSDDTILAVLPGSRVGEIKYMGPLFLEVMQRIAMERPHVHFIVPIACQDLYPVFFKQLHAEYDYLKIQVIQGNAREAMAISDVVLTKSGTATLEAMLLKRPMVVAFKWGILTHAIIAPQVKVPYIALPNLLAGKKLIPEFVQEKANVDSITESVLNLLDSSNQNELIKQFTDIHRTLRQNANEKAALAILRILEDSLT.

The protein belongs to the LpxB family.

The catalysed reaction is a lipid X + a UDP-2-N,3-O-bis[(3R)-3-hydroxyacyl]-alpha-D-glucosamine = a lipid A disaccharide + UDP + H(+). It participates in bacterial outer membrane biogenesis; LPS lipid A biosynthesis. Its function is as follows. Condensation of UDP-2,3-diacylglucosamine and 2,3-diacylglucosamine-1-phosphate to form lipid A disaccharide, a precursor of lipid A, a phosphorylated glycolipid that anchors the lipopolysaccharide to the outer membrane of the cell. The sequence is that of Lipid-A-disaccharide synthase 2 from Legionella pneumophila (strain Paris).